The following is a 130-amino-acid chain: MSTLVSLPGATPVAAPDYQSLERPLNFTESAAAKVKSLIQEEGNLDLALRVYIEGGGCSGFQYGFEFDENRAEDDLAVQTSGVTLLVDPLSLQYLMGAEVDYTESLTGAQFVIRNPNAKTTCGCGSSFSM.

Cysteine 58, cysteine 122, and cysteine 124 together coordinate iron-sulfur cluster.

Belongs to the HesB/IscA family. In terms of assembly, homodimer. Requires iron-sulfur cluster as cofactor.

Its function is as follows. Required for insertion of 4Fe-4S clusters for at least IspG. This Stenotrophomonas maltophilia (strain R551-3) protein is Iron-sulfur cluster insertion protein ErpA.